We begin with the raw amino-acid sequence, 309 residues long: Low density lipoprotein receptor adapter protein 1-A (309 aa).

The PID domain maps to Leu41–Gln195. Positions Glu179–Ser199 are disordered. Residues Leu213–Glu217 carry the Clathrin box motif. The AP-2 complex binding stretch occupies residues Trp250 to Leu277. A [DE]-X(1,2)-F-X-X-[FL]-X-X-X-R motif motif is present at residues Glu258–Arg267.

In terms of assembly, interacts (via PID domain) with ldlr (via NPXY motif). Binds to soluble clathrin trimers and to the adapter protein complex 2 (AP-2, beta 2 subunit). Binds to phosphoinositides, which regulate clathrin bud assembly at the cell surface. Interacts with the VLDL receptor (vldlr). Interacts with the vitellogenin receptor. As to expression, expressed at high level during oogenesis and embryogenesis. Found in the oocyte vegetal cortex. Found at low level in the adult liver and spleen. Found at very low level in testis and heart.

The protein localises to the cytoplasm. Functionally, adapter protein (clathrin-associated sorting protein (CLASP)) required for efficient endocytosis of the LDL receptor (LDLR). Also involved in the vitellogenin receptor mediated endocytosis of nutrients during oogenesis. In Xenopus laevis (African clawed frog), this protein is Low density lipoprotein receptor adapter protein 1-A.